Here is a 411-residue protein sequence, read N- to C-terminus: Probable phosphatase HAD1 (411 aa).

Polar residues predominate over residues 14-23 (LPSPNTSQPP). The disordered stretch occupies residues 14–33 (LPSPNTSQPPSAAPSRRGSF). Residue Asp-61 is the Nucleophile of the active site. The Mg(2+) site is built by Asp-61, Asp-63, and Asp-338. Residue Asp-63 is the Proton donor of the active site. The interval 296–386 (PRPTPDVTPV…QSGQAGVTLD (91 aa)) is disordered. Over residues 326 to 345 (VRNTQTIMKGSDDLTGNDSV) the composition is skewed to polar residues. The segment covering 362–373 (SVEKRAEMEFHR) has biased composition (basic and acidic residues).

Belongs to the HAD-like hydrolase superfamily. In terms of processing, phosphorylated.

In terms of biological role, probable phosphatase. Required for cell wall integrity and virulence. This is Probable phosphatase HAD1 from Cryptococcus neoformans var. grubii serotype A (strain H99 / ATCC 208821 / CBS 10515 / FGSC 9487) (Filobasidiella neoformans var. grubii).